The primary structure comprises 358 residues: Magnesium-protoporphyrin IX monomethyl ester [oxidative] cyclase (358 aa).

This sequence belongs to the AcsF family. Requires Fe cation as cofactor.

The catalysed reaction is Mg-protoporphyrin IX 13-monomethyl ester + 3 NADPH + 3 O2 + 2 H(+) = 3,8-divinyl protochlorophyllide a + 3 NADP(+) + 5 H2O. It participates in porphyrin-containing compound metabolism; chlorophyll biosynthesis (light-independent). Its function is as follows. Catalyzes the formation of the isocyclic ring in chlorophyll biosynthesis. Mediates the cyclase reaction, which results in the formation of divinylprotochlorophyllide (Pchlide) characteristic of all chlorophylls from magnesium-protoporphyrin IX 13-monomethyl ester (MgPMME). The protein is Magnesium-protoporphyrin IX monomethyl ester [oxidative] cyclase of Trichodesmium erythraeum (strain IMS101).